Consider the following 350-residue polypeptide: Ion-translocating oxidoreductase complex subunit D (350 aa).

4 helical membrane passes run 20-40 (VMLWVILAALPGLLAQTLFFG), 42-62 (GNLINVVWCIALALGSEAAFL), 89-109 (LPQFTPWWVSGIAVVSAIVVA), and 120-140 (PFNPAMVGYALALISFPVAMT). Thr178 is subject to FMN phosphoryl threonine. A run of 5 helical transmembrane segments spans residues 204 to 224 (LIARGWEWVNLAFLAGGVLLI), 228 to 248 (IITWHIPVAFLAGIAAMSLAF), 255 to 275 (YAPLQLHLLAGGTMLGAFFIA), 282 to 302 (ATSHQGKLIYGAGIGVLVYLI), and 306 to 326 (GNYPDAVAFSVLLMNFAVPFI).

It belongs to the NqrB/RnfD family. In terms of assembly, the complex is composed of six subunits: RnfA, RnfB, RnfC, RnfD, RnfE and RnfG. FMN serves as cofactor.

The protein localises to the cell inner membrane. Functionally, part of a membrane-bound complex that couples electron transfer with translocation of ions across the membrane. The chain is Ion-translocating oxidoreductase complex subunit D from Marinobacter nauticus (strain ATCC 700491 / DSM 11845 / VT8) (Marinobacter aquaeolei).